The following is a 374-amino-acid chain: N-acetyldiaminopimelate deacetylase (374 aa).

Asp68 is a catalytic residue. Residue Glu127 is the Proton acceptor of the active site.

The protein belongs to the peptidase M20A family. N-acetyldiaminopimelate deacetylase subfamily.

The enzyme catalyses N-acetyl-(2S,6S)-2,6-diaminopimelate + H2O = (2S,6S)-2,6-diaminopimelate + acetate. Its pathway is amino-acid biosynthesis; L-lysine biosynthesis via DAP pathway; LL-2,6-diaminopimelate from (S)-tetrahydrodipicolinate (acetylase route): step 3/3. Catalyzes the conversion of N-acetyl-diaminopimelate to diaminopimelate and acetate. This is N-acetyldiaminopimelate deacetylase from Shouchella clausii (strain KSM-K16) (Alkalihalobacillus clausii).